We begin with the raw amino-acid sequence, 97 residues long: uncharacterized protein (97 aa).

This is an uncharacterized protein from Emericella nidulans (Aspergillus nidulans).